Consider the following 472-residue polypeptide: Eukaryotic translation initiation factor 2 subunit 3 (472 aa).

Ala-2 carries the post-translational modification N-acetylalanine; partial. Ser-16 is subject to Phosphoserine. The tr-type G domain occupies 39-248; sequence QATINIGTIG…IVKKIPVPPR (210 aa). The tract at residues 48 to 55 is G1; the sequence is GHVAHGKS. 51 to 56 lines the GTP pocket; sequence AHGKST. Residues 76 to 80 form a G2 region; the sequence is NITIK. The tract at residues 134-137 is G3; it reads DCPG. GTP-binding positions include 190-193 and 225-227; these read NKID and SAQ. The G4 stretch occupies residues 190 to 193; the sequence is NKID. A G5 region spans residues 225–227; that stretch reads SAQ. Residues 457 to 469 are interacts with CDC123; that stretch reads GQIRRGVTIKPTV.

It belongs to the TRAFAC class translation factor GTPase superfamily. Classic translation factor GTPase family. EIF2G subfamily. In terms of assembly, eukaryotic translation initiation factor 2 eIF2 is a heterotrimeric complex composed of an alpha (EIF2S1), a beta (EIF2S2) and a gamma (EIF2S3) chain. eIF2 is member of the 43S pre-initiation complex (43S PIC). Interacts (via C-terminus) with CDC123; the interaction is direct. As to expression, expressed in testis, brain, liver and muscle.

Its subcellular location is the cytoplasm. The protein localises to the cytosol. It catalyses the reaction GTP + H2O = GDP + phosphate + H(+). Member of the eIF2 complex that functions in the early steps of protein synthesis by forming a ternary complex with GTP and initiator tRNA. This complex binds to a 40S ribosomal subunit, followed by mRNA binding to form the 43S pre-initiation complex (43S PIC). Junction of the 60S ribosomal subunit to form the 80S initiation complex is preceded by hydrolysis of the GTP bound to eIF2 and release of an eIF2-GDP binary complex. In order for eIF2 to recycle and catalyze another round of initiation, the GDP bound to eIF2 must exchange with GTP by way of a reaction catalyzed by eIF-2B. The polypeptide is Eukaryotic translation initiation factor 2 subunit 3 (EIF2S3) (Homo sapiens (Human)).